An 809-amino-acid polypeptide reads, in one-letter code: F-BAR domain only protein 2 (809 aa).

Positions 3 to 250 (MAHFVENFWG…NMANTTIESL (248 aa)) constitute an F-BAR domain. A mediates dimerization and binding to membranes enriched in Pi(4,5)-P2 and induces their tubulation region spans residues 3 to 274 (MAHFVENFWG…PGLIEFEECD (272 aa)). Positions 87–156 (HLDLVRKLQE…CVEQERLKKE (70 aa)) form a coiled coil. Lys-297 is covalently cross-linked (Glycyl lysine isopeptide (Lys-Gly) (interchain with G-Cter in SUMO2)). Positions 301–352 (DAESVECPDADSLNIPDVDEEGFSIKPEANQNDTKENHFYSSSDSDSEDEEP) are disordered. At Ser-312 the chain carries Phosphoserine. Thr-385 is modified (phosphothreonine). Phosphoserine occurs at positions 387, 394, 402, and 403. Residues 390 to 416 (VSRHSPVQMNRNSSNEELTKSKPSSLP) show a composition bias toward polar residues. Disordered regions lie at residues 390–422 (VSRH…KGTN) and 435–536 (LESS…PVSL). Residues 435-456 (LESSSAPLTSSSSARPTTPLSL) show a composition bias toward low complexity. Phosphoserine occurs at positions 487, 492, 495, 507, 509, 510, and 532. A compositionally biased stretch (low complexity) spans 501-520 (PLARAESSSSISSSASLSAA). The tract at residues 520-809 (ANTPTVGVSR…FATGRYLADC (290 aa)) is mediates interaction with DAB2, EPS15, EPS15R and ITSN1. The MHD domain maps to 541 to 808 (TLPVAIALTE…RFATGRYLAD (268 aa)).

It belongs to the FCHO family. Homodimer; disulfide-linked. May form homotetramer. Interacts with AP2A1. Interacts with EPS15, EPS15R, ITSN1 and ITSN2; recruit those scaffolding proteins which in turn may interact with the adaptor protein complex AP-2 at the plasma membrane. Interacts with DAB2 (via DPF motifs); mediates LDL receptor/LDLR endocytosis. In terms of processing, ubiquitinated. Mainly undergoes monoubiquitination but also polyubiquitination. Ubiquitously expressed (at protein level).

It is found in the membrane. The protein localises to the clathrin-coated pit. In terms of biological role, functions in an early step of clathrin-mediated endocytosis. Has both a membrane binding/bending activity and the ability to recruit proteins essential to the formation of functional clathrin-coated pits. Has a lipid-binding activity with a preference for membranes enriched in phosphatidylserine and phosphoinositides (Pi(4,5) biphosphate) like the plasma membrane. Its membrane-bending activity might be important for the subsequent action of clathrin and adaptors in the formation of clathrin-coated vesicles. Involved in adaptor protein complex AP-2-dependent endocytosis of the transferrin receptor, it also functions in the AP-2-independent endocytosis of the LDL receptor. The protein is F-BAR domain only protein 2 (Fcho2) of Mus musculus (Mouse).